We begin with the raw amino-acid sequence, 299 residues long: Tyrosine recombinase XerC (299 aa).

The region spanning 1–86 (MRNELLDFLE…AIRSLFKFLT (86 aa)) is the Core-binding (CB) domain. Residues 107–293 (KLPEFLSIEE…NQARMTEVYN (187 aa)) enclose the Tyr recombinase domain. Residues Arg-146, Lys-170, His-245, Arg-248, and His-271 contribute to the active site. Tyr-280 (O-(3'-phospho-DNA)-tyrosine intermediate) is an active-site residue.

It belongs to the 'phage' integrase family. XerC subfamily. In terms of assembly, forms a cyclic heterotetrameric complex composed of two molecules of XerC and two molecules of XerD.

It is found in the cytoplasm. Site-specific tyrosine recombinase, which acts by catalyzing the cutting and rejoining of the recombining DNA molecules. The XerC-XerD complex is essential to convert dimers of the bacterial chromosome into monomers to permit their segregation at cell division. It also contributes to the segregational stability of plasmids. The sequence is that of Tyrosine recombinase XerC from Natranaerobius thermophilus (strain ATCC BAA-1301 / DSM 18059 / JW/NM-WN-LF).